Consider the following 500-residue polypeptide: Aspartyl/glutamyl-tRNA(Asn/Gln) amidotransferase subunit B (500 aa).

Belongs to the GatB/GatE family. GatB subfamily. As to quaternary structure, heterotrimer of A, B and C subunits.

The catalysed reaction is L-glutamyl-tRNA(Gln) + L-glutamine + ATP + H2O = L-glutaminyl-tRNA(Gln) + L-glutamate + ADP + phosphate + H(+). It catalyses the reaction L-aspartyl-tRNA(Asn) + L-glutamine + ATP + H2O = L-asparaginyl-tRNA(Asn) + L-glutamate + ADP + phosphate + 2 H(+). In terms of biological role, allows the formation of correctly charged Asn-tRNA(Asn) or Gln-tRNA(Gln) through the transamidation of misacylated Asp-tRNA(Asn) or Glu-tRNA(Gln) in organisms which lack either or both of asparaginyl-tRNA or glutaminyl-tRNA synthetases. The reaction takes place in the presence of glutamine and ATP through an activated phospho-Asp-tRNA(Asn) or phospho-Glu-tRNA(Gln). The protein is Aspartyl/glutamyl-tRNA(Asn/Gln) amidotransferase subunit B of Allorhizobium ampelinum (strain ATCC BAA-846 / DSM 112012 / S4) (Agrobacterium vitis (strain S4)).